The following is a 338-amino-acid chain: Lipoate-protein ligase A (338 aa).

Positions aspartate 29–valine 216 constitute a BPL/LPL catalytic domain. Residues arginine 71, glycine 76–phenylalanine 79, and lysine 134 contribute to the ATP site. Lysine 134 contacts (R)-lipoate.

This sequence belongs to the LplA family. As to quaternary structure, monomer.

The protein resides in the cytoplasm. It carries out the reaction L-lysyl-[lipoyl-carrier protein] + (R)-lipoate + ATP = N(6)-[(R)-lipoyl]-L-lysyl-[lipoyl-carrier protein] + AMP + diphosphate + H(+). It functions in the pathway protein modification; protein lipoylation via exogenous pathway; protein N(6)-(lipoyl)lysine from lipoate: step 1/2. The protein operates within protein modification; protein lipoylation via exogenous pathway; protein N(6)-(lipoyl)lysine from lipoate: step 2/2. Catalyzes both the ATP-dependent activation of exogenously supplied lipoate to lipoyl-AMP and the transfer of the activated lipoyl onto the lipoyl domains of lipoate-dependent enzymes. The protein is Lipoate-protein ligase A of Aeromonas hydrophila subsp. hydrophila (strain ATCC 7966 / DSM 30187 / BCRC 13018 / CCUG 14551 / JCM 1027 / KCTC 2358 / NCIMB 9240 / NCTC 8049).